The chain runs to 340 residues: Heat-inducible transcription repressor HrcA (340 aa).

It belongs to the HrcA family.

Its function is as follows. Negative regulator of class I heat shock genes (grpE-dnaK-dnaJ and groELS operons). Prevents heat-shock induction of these operons. The polypeptide is Heat-inducible transcription repressor HrcA (Burkholderia vietnamiensis (strain G4 / LMG 22486) (Burkholderia cepacia (strain R1808))).